The following is a 341-amino-acid chain: Zinc transporter ZIP11 (341 aa).

Helical transmembrane passes span 12-32 (LLGT…VFVF), 44-64 (LGFA…APAV), 72-92 (GFGS…AAFV), 193-213 (IALL…AVGV), 262-284 (FWYG…FAVV), 289-306 (ILPY…YVIM), and 321-341 (LASW…VGLG).

This sequence belongs to the ZIP transporter (TC 2.A.5) family.

Its subcellular location is the cell membrane. It localises to the nucleus. The protein localises to the cytoplasm. The protein resides in the golgi apparatus. The enzyme catalyses Zn(2+)(in) = Zn(2+)(out). It carries out the reaction Cu(2+)(in) = Cu(2+)(out). Its function is as follows. Zinc importer that regulates cytosolic zinc concentrations either via zinc influx from the extracellular compartment or efflux from intracellular organelles such as Golgi apparatus. May transport copper ions as well. The transport mechanism remains to be elucidated. The protein is Zinc transporter ZIP11 (SLC39A11) of Bos taurus (Bovine).